Here is a 401-residue protein sequence, read N- to C-terminus: Nicotinamide/nicotinic acid mononucleotide adenylyltransferase 1 (401 aa).

Disordered regions lie at residues 1–30 (MDPT…KIPK) and 48–123 (APFN…RGVQ). A compositionally biased stretch (basic residues) spans 52 to 69 (IKRKKKHPKHHHHHHHSR). 4 positions are modified to phosphoserine: serine 91, serine 95, serine 96, and serine 111. 2 residues coordinate NAD(+): serine 173 and phenylalanine 174. Residue histidine 181 coordinates ATP. NAD(+)-binding residues include threonine 253, glycine 288, aspartate 290, tryptophan 301, arginine 320, and asparagine 351. An ATP-binding site is contributed by 356-359 (TKVR).

It belongs to the eukaryotic NMN adenylyltransferase family. In terms of assembly, homotetramer. Ni(2+) serves as cofactor.

The protein localises to the cytoplasm. It localises to the nucleus. It carries out the reaction beta-nicotinamide D-ribonucleotide + ATP + H(+) = diphosphate + NAD(+). The enzyme catalyses nicotinate beta-D-ribonucleotide + ATP + H(+) = deamido-NAD(+) + diphosphate. The protein operates within cofactor biosynthesis; NAD(+) biosynthesis; deamido-NAD(+) from nicotinate D-ribonucleotide: step 1/1. It functions in the pathway cofactor biosynthesis; NAD(+) biosynthesis; NAD(+) from nicotinamide D-ribonucleotide: step 1/1. Catalyzes the formation of NAD(+) from nicotinamide mononucleotide (NMN) and ATP. Can also use the deamidated form; nicotinic acid mononucleotide (NaMN) as substrate to form deamido-NAD(+) (NaAD). Key enzyme in both de novo and salvage pathways for NAD(+) biosynthesis. Predominantly acts in the salvage pathways via NMN. This Saccharomyces cerevisiae (strain ATCC 204508 / S288c) (Baker's yeast) protein is Nicotinamide/nicotinic acid mononucleotide adenylyltransferase 1.